Reading from the N-terminus, the 153-residue chain is 6,7-dimethyl-8-ribityllumazine synthase (153 aa).

5-amino-6-(D-ribitylamino)uracil is bound by residues Phe22, 56 to 58 (AFE), and 80 to 82 (TVI). Residue 85-86 (ST) coordinates (2S)-2-hydroxy-3-oxobutyl phosphate. His88 functions as the Proton donor in the catalytic mechanism. Phe113 is a binding site for 5-amino-6-(D-ribitylamino)uracil. Arg127 contributes to the (2S)-2-hydroxy-3-oxobutyl phosphate binding site.

This sequence belongs to the DMRL synthase family. In terms of assembly, forms an icosahedral capsid composed of 60 subunits, arranged as a dodecamer of pentamers.

It catalyses the reaction (2S)-2-hydroxy-3-oxobutyl phosphate + 5-amino-6-(D-ribitylamino)uracil = 6,7-dimethyl-8-(1-D-ribityl)lumazine + phosphate + 2 H2O + H(+). It participates in cofactor biosynthesis; riboflavin biosynthesis; riboflavin from 2-hydroxy-3-oxobutyl phosphate and 5-amino-6-(D-ribitylamino)uracil: step 1/2. Functionally, catalyzes the formation of 6,7-dimethyl-8-ribityllumazine by condensation of 5-amino-6-(D-ribitylamino)uracil with 3,4-dihydroxy-2-butanone 4-phosphate. This is the penultimate step in the biosynthesis of riboflavin. The protein is 6,7-dimethyl-8-ribityllumazine synthase of Actinobacillus pleuropneumoniae serotype 3 (strain JL03).